Here is a 334-residue protein sequence, read N- to C-terminus: ADP-L-glycero-D-manno-heptose-6-epimerase (334 aa).

Residues 11-12, 32-33, Lys39, Lys54, 77-81, and Asn94 each bind NADP(+); these read FI, DN, and QGACS. Catalysis depends on Tyr141, which acts as the Proton acceptor. Lys145 contributes to the NADP(+) binding site. Asn171 contacts substrate. NADP(+) is bound by residues Val172 and Lys180. Catalysis depends on Lys180, which acts as the Proton acceptor. Residues Arg182, His189, 203 to 206, Arg216, and Tyr295 contribute to the substrate site; that span reads FGSN.

It belongs to the NAD(P)-dependent epimerase/dehydratase family. HldD subfamily. Homopentamer. Requires NADP(+) as cofactor.

The enzyme catalyses ADP-D-glycero-beta-D-manno-heptose = ADP-L-glycero-beta-D-manno-heptose. Its pathway is nucleotide-sugar biosynthesis; ADP-L-glycero-beta-D-manno-heptose biosynthesis; ADP-L-glycero-beta-D-manno-heptose from D-glycero-beta-D-manno-heptose 7-phosphate: step 4/4. In terms of biological role, catalyzes the interconversion between ADP-D-glycero-beta-D-manno-heptose and ADP-L-glycero-beta-D-manno-heptose via an epimerization at carbon 6 of the heptose. This Neisseria gonorrhoeae (strain ATCC 700825 / FA 1090) protein is ADP-L-glycero-D-manno-heptose-6-epimerase.